The following is a 444-amino-acid chain: Methylenetetrahydrofolate--tRNA-(uracil-5-)-methyltransferase TrmFO (444 aa).

Residue glycine 10–glycine 15 coordinates FAD.

This sequence belongs to the MnmG family. TrmFO subfamily. FAD serves as cofactor.

The protein resides in the cytoplasm. The catalysed reaction is uridine(54) in tRNA + (6R)-5,10-methylene-5,6,7,8-tetrahydrofolate + NADH + H(+) = 5-methyluridine(54) in tRNA + (6S)-5,6,7,8-tetrahydrofolate + NAD(+). The enzyme catalyses uridine(54) in tRNA + (6R)-5,10-methylene-5,6,7,8-tetrahydrofolate + NADPH + H(+) = 5-methyluridine(54) in tRNA + (6S)-5,6,7,8-tetrahydrofolate + NADP(+). Its function is as follows. Catalyzes the folate-dependent formation of 5-methyl-uridine at position 54 (M-5-U54) in all tRNAs. The protein is Methylenetetrahydrofolate--tRNA-(uracil-5-)-methyltransferase TrmFO of Streptococcus pneumoniae (strain ATCC 700669 / Spain 23F-1).